The chain runs to 415 residues: Adenosylhomocysteinase (415 aa).

Residues T53, D124, and E147 each coordinate substrate. 148–150 (TTT) lines the NAD(+) pocket. Substrate is bound by residues K177 and D181. NAD(+) contacts are provided by residues N182, 211-216 (GYGWVG), E234, N269, 290-292 (SGH), and N337.

Belongs to the adenosylhomocysteinase family. NAD(+) is required as a cofactor.

The protein resides in the cytoplasm. The catalysed reaction is S-adenosyl-L-homocysteine + H2O = L-homocysteine + adenosine. It functions in the pathway amino-acid biosynthesis; L-homocysteine biosynthesis; L-homocysteine from S-adenosyl-L-homocysteine: step 1/1. May play a key role in the regulation of the intracellular concentration of adenosylhomocysteine. In Sulfolobus acidocaldarius (strain ATCC 33909 / DSM 639 / JCM 8929 / NBRC 15157 / NCIMB 11770), this protein is Adenosylhomocysteinase.